A 316-amino-acid polypeptide reads, in one-letter code: Ferrochelatase (316 aa).

Positions 188 and 269 each coordinate Fe cation.

Belongs to the ferrochelatase family.

The protein resides in the cytoplasm. The enzyme catalyses heme b + 2 H(+) = protoporphyrin IX + Fe(2+). Its pathway is porphyrin-containing compound metabolism; protoheme biosynthesis; protoheme from protoporphyrin-IX: step 1/1. Catalyzes the ferrous insertion into protoporphyrin IX. The polypeptide is Ferrochelatase (Wolinella succinogenes (strain ATCC 29543 / DSM 1740 / CCUG 13145 / JCM 31913 / LMG 7466 / NCTC 11488 / FDC 602W) (Vibrio succinogenes)).